The primary structure comprises 277 residues: NH(3)-dependent NAD(+) synthetase (277 aa).

36-43 (GLSGGIDS) contacts ATP. Asp42 is a binding site for Mg(2+). Position 118 (Arg118) interacts with deamido-NAD(+). Thr138 lines the ATP pocket. Glu143 serves as a coordination point for Mg(2+). 2 residues coordinate ATP: Lys167 and Ser189.

The protein belongs to the NAD synthetase family. In terms of assembly, homodimer.

It carries out the reaction deamido-NAD(+) + NH4(+) + ATP = AMP + diphosphate + NAD(+) + H(+). The protein operates within cofactor biosynthesis; NAD(+) biosynthesis; NAD(+) from deamido-NAD(+) (ammonia route): step 1/1. Functionally, catalyzes the ATP-dependent amidation of deamido-NAD to form NAD. Uses ammonia as a nitrogen source. This chain is NH(3)-dependent NAD(+) synthetase, found in Chlorobaculum parvum (strain DSM 263 / NCIMB 8327) (Chlorobium vibrioforme subsp. thiosulfatophilum).